The following is a 177-amino-acid chain: Large ribosomal subunit protein uL6 (177 aa).

It belongs to the universal ribosomal protein uL6 family. As to quaternary structure, part of the 50S ribosomal subunit.

In terms of biological role, this protein binds to the 23S rRNA, and is important in its secondary structure. It is located near the subunit interface in the base of the L7/L12 stalk, and near the tRNA binding site of the peptidyltransferase center. This Cellvibrio japonicus (strain Ueda107) (Pseudomonas fluorescens subsp. cellulosa) protein is Large ribosomal subunit protein uL6.